Consider the following 254-residue polypeptide: Imidazole glycerol phosphate synthase subunit HisF (254 aa).

Active-site residues include Asp-13 and Asp-132.

This sequence belongs to the HisA/HisF family. As to quaternary structure, heterodimer of HisH and HisF.

The protein resides in the cytoplasm. It carries out the reaction 5-[(5-phospho-1-deoxy-D-ribulos-1-ylimino)methylamino]-1-(5-phospho-beta-D-ribosyl)imidazole-4-carboxamide + L-glutamine = D-erythro-1-(imidazol-4-yl)glycerol 3-phosphate + 5-amino-1-(5-phospho-beta-D-ribosyl)imidazole-4-carboxamide + L-glutamate + H(+). The protein operates within amino-acid biosynthesis; L-histidine biosynthesis; L-histidine from 5-phospho-alpha-D-ribose 1-diphosphate: step 5/9. Its function is as follows. IGPS catalyzes the conversion of PRFAR and glutamine to IGP, AICAR and glutamate. The HisF subunit catalyzes the cyclization activity that produces IGP and AICAR from PRFAR using the ammonia provided by the HisH subunit. This chain is Imidazole glycerol phosphate synthase subunit HisF, found in Wolinella succinogenes (strain ATCC 29543 / DSM 1740 / CCUG 13145 / JCM 31913 / LMG 7466 / NCTC 11488 / FDC 602W) (Vibrio succinogenes).